Consider the following 1181-residue polypeptide: Katanin p80 WD40 repeat-containing subunit B1 homolog KTN80.2 (1181 aa).

7 WD repeats span residues Ala-13–Ser-53, Gly-56–Ala-95, Gly-98–Thr-137, Gly-140–Lys-181, His-183–Ser-221, Pro-224–Asp-264, and Gly-266–Tyr-303. The DWD box signature appears at Phe-114 to Arg-130. Disordered regions lie at residues Ala-361–Leu-383, Lys-503–Ser-597, Thr-702–Thr-739, Lys-754–Thr-869, and Thr-988–Arg-1008. Polar residues-rich tracts occupy residues Gly-365–Asp-379 and Arg-509–Ser-526. Basic and acidic residues-rich tracts occupy residues Asp-530–Gly-553 and Arg-569–Ser-585. Polar residues-rich tracts occupy residues Ser-703–Thr-739, Lys-754–Ser-791, Ser-822–Thr-841, and Ile-850–Met-859. Basic and acidic residues predominate over residues Thr-998 to Arg-1008.

Belongs to the WD repeat KATNB1 family. In terms of assembly, component of KTN80-KTN1 complexes composed of a hexamer of KTN1-KTN80 heterodimers that sense microtubule (MT) geometry to confer precise MT severing. Interacts directly with AAA1/KTN1. Interacts with subunits of the CUL4-based E3 ligase complex DDB1A and DDB1B. Expressed at low levels in siliques, flowers, leaves, stems and roots.

It is found in the cytoplasm. Its subcellular location is the cytoskeleton. May participate in a complex which severs microtubules in an ATP-dependent manner. Microtubule severing may promote rapid reorganization of cellular microtubule arrays. Confers precision to microtubule (MT) severing by specific targeting of KTN1 to MT cleavage sites such as crossover or branching nucleation sites. Together with other KTN80s, regulates cell elongation by modulating MT organization. Negative regulator of abscisic acid (ABA) responses. May function as a substrate receptor for cullin-RING ubiquitin ligase 4 complexes (CRL4), a family of E3 ligases involved in protein degradation. The chain is Katanin p80 WD40 repeat-containing subunit B1 homolog KTN80.2 from Arabidopsis thaliana (Mouse-ear cress).